The primary structure comprises 883 residues: MANPQASPILHHPQNHLSLFHFRTTTSPRSFSSLHFRKPLLFLSSSSSFSSKLQQSEQQCNNHQVRHVSTVPVEYSTPTPPESDDFLSEIDRLKSLLSKLDVSKDLRRKDAVIDADSRVRRFFSENRGGLSKVFGYLGLNSNEMFLVKCVIAAGQEHALCMNYEEAFGEEEEEYTVRSSVKNALYALVEMIERFDVNSSGYKGRREMGTVLDSEEIAHFRKFLTFLEEIEQFYDCIGGIIGYQVMVLELLHQSSKRRNTNRSQLVEESLGCQYLEMHTPSVLDLTQEEDYASQAALWGIEGLPDLGEIYPLGGAADRLGLIDSETGECLPAAMLAHCGRTLLEGLIRDLQAREFLYFKLYGKQCVTPVAIMTSAAKNNHEHVSSLCERLKWFGRGQSNFRLFEQPLVPAVSAEDGQWIVSKPFVPVSKPGGHGVIWKLAYDKGVFNWFYDHGRKGATVRQVSNVVAATDVTLLALAGIGLRYNKKLGFASCKRNAGATEGINVLMEKKNFDGKWEYGISCIEYTEFDKFDISNRSPSSNGLQADFPANTNILYVDLHSAELIGSSSNAKSLPNMVLNTKKRIEYLDQYGDYHSVMGGRLECTMQNIADNFFNKFPSRCHGSLEDKLDTYIVYNERRKVTSSAKKKKPHASAALHQTPDGALLDILRNGYDLLTECDIKLPMIEANDKYVDSPPPYLILLHPALGPLWEVSRQKFKGGSISSCSELQLEIAEFSWNNVQVDGSLIVTAENAMGSTTPNDNGEPILQYGLRCGKCKLHNVNVVNRGIDWNSKSNVYWRNDVNRLETCKIILHGNAEFEASNVTIEGHHVFEVPDGHKLKITSGNAGLSINLEALKEEVMETGSWYWNYQLNGSHIHLQQVEVSQS.

Residues 1–72 (MANPQASPIL…HQVRHVSTVP (72 aa)) constitute a chloroplast transit peptide.

This sequence belongs to the UDPGP type 1 family. Mg(2+) is required as a cofactor.

It is found in the plastid. The protein resides in the chloroplast. The catalysed reaction is alpha-D-glucose 1-phosphate + UTP + H(+) = UDP-alpha-D-glucose + diphosphate. Inhibited by pyrophosphate. Functionally, involved in the biosynthesis of sulfolipids in the chloroplast. Catalyzes the first committed step in sulfolipid biosynthesis. Converts glucose 1-phosphate to UDP-glucose, the precursor of the polar head of sulfolipid. In addition to glucose 1-phosphate, can use galactose 1-phosphate, but with much lower activity. No uridyltransferase activity with other hexose monophosphates. Specific for UTP and cannot use ATP, CTP, and GTP. This chain is UTP--glucose-1-phosphate uridylyltransferase 3, chloroplastic, found in Arabidopsis thaliana (Mouse-ear cress).